The sequence spans 498 residues: Lysine--tRNA ligase (498 aa).

Mg(2+) is bound by residues glutamate 407 and glutamate 414.

Belongs to the class-II aminoacyl-tRNA synthetase family. In terms of assembly, homodimer. Mg(2+) is required as a cofactor.

The protein resides in the cytoplasm. The enzyme catalyses tRNA(Lys) + L-lysine + ATP = L-lysyl-tRNA(Lys) + AMP + diphosphate. In Rhizobium meliloti (strain 1021) (Ensifer meliloti), this protein is Lysine--tRNA ligase (lysS).